Here is a 469-residue protein sequence, read N- to C-terminus: GDNF family receptor alpha-1 (469 aa).

A signal peptide spans 1–27 (MFLALLYLALPLADVLLSAEVSGLPGG). Repeat copies occupy residues 28–116 (DRLD…LQGN), 149–237 (KGNN…YEDR), and 238–341 (EKPN…KNAI). The cysteines at positions 39 and 45 are disulfide-linked. 2 N-linked (GlcNAc...) asparagine glycosylation sites follow: Asn62 and Asn163. 10 disulfides stabilise this stretch: Cys153/Cys213, Cys160/Cys166, Cys177/Cys191, Cys186/Cys232, Cys215/Cys220, Cys242/Cys312, Cys249/Cys255, Cys266/Cys284, Cys276/Cys336, and Cys314/Cys324. N-linked (GlcNAc...) asparagine glycans are attached at residues Asn346 and Asn405. Ser430 carries the GPI-anchor amidated serine lipid modification. Positions 431-469 (HISSENSFALPTSFYPSTPLILMTIALSLFLFLSSSVVL) are cleaved as a propeptide — removed in mature form.

It belongs to the GDNFR family. As to quaternary structure, interacts with GDNF ligand and RET: forms a 2:2:2 ternary complex composed of GDNF ligand, GFRA1 and RET receptor.

Its subcellular location is the cell membrane. It localises to the golgi apparatus. It is found in the trans-Golgi network. The protein localises to the endosome. The protein resides in the multivesicular body. Coreceptor for GDNF, a neurotrophic factor that enhances survival and morphological differentiation of dopaminergic neurons and increases their high-affinity dopamine uptake. GDNF-binding leads to autophosphorylation and activation of the RET receptor. This is GDNF family receptor alpha-1 (GFRA1) from Gallus gallus (Chicken).